The primary structure comprises 448 residues: Phosphoglucosamine mutase (448 aa).

S102 acts as the Phosphoserine intermediate in catalysis. The Mg(2+) site is built by S102, D241, D243, and D245. A Phosphoserine modification is found at S102.

This sequence belongs to the phosphohexose mutase family. It depends on Mg(2+) as a cofactor. Post-translationally, activated by phosphorylation.

It carries out the reaction alpha-D-glucosamine 1-phosphate = D-glucosamine 6-phosphate. Catalyzes the conversion of glucosamine-6-phosphate to glucosamine-1-phosphate. In Ruegeria pomeroyi (strain ATCC 700808 / DSM 15171 / DSS-3) (Silicibacter pomeroyi), this protein is Phosphoglucosamine mutase.